The sequence spans 37 residues: Large ribosomal subunit protein bL36 (37 aa).

It belongs to the bacterial ribosomal protein bL36 family.

This Acidothermus cellulolyticus (strain ATCC 43068 / DSM 8971 / 11B) protein is Large ribosomal subunit protein bL36.